Here is a 157-residue protein sequence, read N- to C-terminus: Transcriptional repressor NrdR (157 aa).

A zinc finger lies at 3-34; the sequence is CPFCSATDTKVIDSRLVADGHQVRRRRECLLC. The region spanning 49 to 139 is the ATP-cone domain; the sequence is PRVVKQDGSR…VYRAFEDVSE (91 aa).

Belongs to the NrdR family. Zn(2+) serves as cofactor.

Functionally, negatively regulates transcription of bacterial ribonucleotide reductase nrd genes and operons by binding to NrdR-boxes. This Shewanella loihica (strain ATCC BAA-1088 / PV-4) protein is Transcriptional repressor NrdR.